The following is a 265-amino-acid chain: Hydroxyethylthiazole kinase (265 aa).

Residue Met-55 coordinates substrate. 2 residues coordinate ATP: Arg-130 and Ser-176. Residue Gly-203 coordinates substrate.

This sequence belongs to the Thz kinase family. Mg(2+) serves as cofactor.

It catalyses the reaction 5-(2-hydroxyethyl)-4-methylthiazole + ATP = 4-methyl-5-(2-phosphooxyethyl)-thiazole + ADP + H(+). It participates in cofactor biosynthesis; thiamine diphosphate biosynthesis; 4-methyl-5-(2-phosphoethyl)-thiazole from 5-(2-hydroxyethyl)-4-methylthiazole: step 1/1. Functionally, catalyzes the phosphorylation of the hydroxyl group of 4-methyl-5-beta-hydroxyethylthiazole (THZ). The polypeptide is Hydroxyethylthiazole kinase (Leptospira interrogans serogroup Icterohaemorrhagiae serovar Lai (strain 56601)).